We begin with the raw amino-acid sequence, 411 residues long: Serine--tRNA ligase (411 aa).

Residue 226-228 (TSE) coordinates L-serine. ATP is bound at residue 257–259 (RKE). Glu280 lines the L-serine pocket. An ATP-binding site is contributed by 344 to 347 (EISS). An L-serine-binding site is contributed by Ser379.

It belongs to the class-II aminoacyl-tRNA synthetase family. Type-1 seryl-tRNA synthetase subfamily. As to quaternary structure, homodimer. The tRNA molecule binds across the dimer.

The protein resides in the cytoplasm. It catalyses the reaction tRNA(Ser) + L-serine + ATP = L-seryl-tRNA(Ser) + AMP + diphosphate + H(+). The catalysed reaction is tRNA(Sec) + L-serine + ATP = L-seryl-tRNA(Sec) + AMP + diphosphate + H(+). Its pathway is aminoacyl-tRNA biosynthesis; selenocysteinyl-tRNA(Sec) biosynthesis; L-seryl-tRNA(Sec) from L-serine and tRNA(Sec): step 1/1. Its function is as follows. Catalyzes the attachment of serine to tRNA(Ser). Is also able to aminoacylate tRNA(Sec) with serine, to form the misacylated tRNA L-seryl-tRNA(Sec), which will be further converted into selenocysteinyl-tRNA(Sec). This Campylobacter jejuni subsp. jejuni serotype O:23/36 (strain 81-176) protein is Serine--tRNA ligase.